We begin with the raw amino-acid sequence, 83 residues long: Large ribosomal subunit protein bL31 (83 aa).

This sequence belongs to the bacterial ribosomal protein bL31 family. Type A subfamily. Part of the 50S ribosomal subunit.

In terms of biological role, binds the 23S rRNA. This chain is Large ribosomal subunit protein bL31, found in Gloeothece citriformis (strain PCC 7424) (Cyanothece sp. (strain PCC 7424)).